Here is a 312-residue protein sequence, read N- to C-terminus: Ribosomal RNA small subunit methyltransferase H (312 aa).

S-adenosyl-L-methionine-binding positions include Ser-33 to His-35, Asp-53, Phe-80, Asp-101, and Gln-108.

Belongs to the methyltransferase superfamily. RsmH family.

The protein localises to the cytoplasm. The catalysed reaction is cytidine(1402) in 16S rRNA + S-adenosyl-L-methionine = N(4)-methylcytidine(1402) in 16S rRNA + S-adenosyl-L-homocysteine + H(+). Functionally, specifically methylates the N4 position of cytidine in position 1402 (C1402) of 16S rRNA. This chain is Ribosomal RNA small subunit methyltransferase H, found in Desulforapulum autotrophicum (strain ATCC 43914 / DSM 3382 / VKM B-1955 / HRM2) (Desulfobacterium autotrophicum).